We begin with the raw amino-acid sequence, 518 residues long: Probable cytochrome P450 9h1 (518 aa).

Heme is bound at residue Cys-462.

The protein belongs to the cytochrome P450 family. Requires heme as cofactor.

The protein resides in the endoplasmic reticulum membrane. It localises to the microsome membrane. Functionally, may be involved in the metabolism of insect hormones and in the breakdown of synthetic insecticides. This chain is Probable cytochrome P450 9h1 (Cyp9h1), found in Drosophila melanogaster (Fruit fly).